An 88-amino-acid chain; its full sequence is Kunitz-type serine protease inhibitor Hg1 (88 aa).

The signal sequence occupies residues 1-21 (MIIFYGLFSILVLTSINIAEA). In terms of domain architecture, BPTI/Kunitz inhibitor spans 29–79 (CLLPPKTGPCKGSFARYYFDIETGSCKAFIYGGCEGNSNNFSEKHHCEKRC). 3 disulfides stabilise this stretch: C29–C79, C38–C62, and C54–C75. N-linked (GlcNAc...) asparagine glycosylation is present at N68.

This sequence belongs to the venom Kunitz-type family. Scorpion delta-Ktx subfamily. Delta-Ktx 1 sub-subfamily. As to expression, expressed by the venom gland.

It localises to the secreted. In terms of biological role, dual-function toxin that inhibits trypsin at a molar ratio of 1:1 (Ki=107 nM) and inhibits mKv1.3/KCNA3 potassium channels (IC(50)=6.2 nM, and inhibits 80% of currents at 1 uM). In Hoffmannihadrurus gertschi (Scorpion), this protein is Kunitz-type serine protease inhibitor Hg1.